The chain runs to 1848 residues: Histone-lysine N-methyltransferase, H3 lysine-79 specific (1848 aa).

One can recognise a DOT1 domain in the interval Asp19–Lys336. Residues Tyr142–Thr145, Phe165–Gln174, Glu192, and Asp228–Phe229 each bind S-adenosyl-L-methionine. Disordered regions lie at residues Lys338–Ala537, Ala558–Arg593, Leu886–Val908, Pro960–Leu996, Leu1033–Leu1075, His1165–Val1190, Gln1221–Ser1333, Gln1345–Gly1374, Val1432–Ala1463, Ala1486–Tyr1508, Glu1529–Glu1559, Lys1573–His1604, Ser1637–Pro1713, and Gln1731–Thr1757. A compositionally biased stretch (basic and acidic residues) spans Gly339–Ala360. Basic residues predominate over residues Gln364–Asn373. Low complexity predominate over residues Ala391–Ser405. The segment covering Ser419–Arg428 has biased composition (polar residues). 2 stretches are compositionally biased toward low complexity: residues Gln429 to Gln439 and Asp453 to Gly474. 3 positions are modified to phosphoserine: Ser491, Ser492, and Ser494. Residues Gly507 to Val518 show a composition bias toward gly residues. 2 stretches are compositionally biased toward basic residues: residues Thr526–Arg535 and Arg582–Arg593. The span at Gln1221 to Gln1235 shows a compositional bias: low complexity. Residues His1236–His1263 are compositionally biased toward basic residues. The span at Glu1289–Pro1300 shows a compositional bias: low complexity. 3 positions are modified to phosphoserine: Ser1318, Ser1324, and Ser1325. The span at Gln1532–Ser1545 shows a compositional bias: low complexity. The span at Tyr1574–Arg1583 shows a compositional bias: basic and acidic residues. Low complexity-rich tracts occupy residues Ala1585–Gly1598 and His1681–Ser1696. Residues Cys1697 to Gly1706 are compositionally biased toward polar residues.

Belongs to the class I-like SAM-binding methyltransferase superfamily. DOT1 family. In terms of tissue distribution, broadly expressed in most tissues. Expressed in a large subset of neurons and in a small subset of glial cells.

The protein localises to the nucleus. It catalyses the reaction L-lysyl(79)-[histone H3] + 3 S-adenosyl-L-methionine = N(6),N(6),N(6)-trimethyl-L-lysyl(79)-[histone H3] + 3 S-adenosyl-L-homocysteine + 3 H(+). Its function is as follows. Histone methyltransferase. Methylates 'Lys-79' of histone H3. Required for Polycomb Group (PcG) and trithorax Group (trxG) maintenance of expression. Also involved in telomeric silencing but do not in centric heterochromatin. Probably participates in pairing sensitivity. The protein is Histone-lysine N-methyltransferase, H3 lysine-79 specific (gpp) of Drosophila melanogaster (Fruit fly).